The chain runs to 453 residues: uncharacterized protein (453 aa).

2 disordered regions span residues 15–42 (LKRKQPSTSFNGKRKRTSSGLIEKSETM) and 425–453 (TNEISSSNNSGTAKNKNNQNRKRNRRHAK). Over residues 425-437 (TNEISSSNNSGTA) the composition is skewed to polar residues. Over residues 443–453 (QNRKRNRRHAK) the composition is skewed to basic residues.

This is an uncharacterized protein from Caenorhabditis elegans.